The chain runs to 79 residues: Sulfur carrier protein TusA (79 aa).

C17 acts as the Cysteine persulfide intermediate in catalysis.

The protein belongs to the sulfur carrier protein TusA family.

It is found in the cytoplasm. In terms of biological role, sulfur carrier protein which probably makes part of a sulfur-relay system. This chain is Sulfur carrier protein TusA, found in Haemophilus influenzae (strain ATCC 51907 / DSM 11121 / KW20 / Rd).